Consider the following 142-residue polypeptide: Large ribosomal subunit protein uL11 (142 aa).

It belongs to the universal ribosomal protein uL11 family. Part of the ribosomal stalk of the 50S ribosomal subunit. Interacts with L10 and the large rRNA to form the base of the stalk. L10 forms an elongated spine to which L12 dimers bind in a sequential fashion forming a multimeric L10(L12)X complex. Post-translationally, one or more lysine residues are methylated.

Forms part of the ribosomal stalk which helps the ribosome interact with GTP-bound translation factors. The chain is Large ribosomal subunit protein uL11 from Maricaulis maris (strain MCS10) (Caulobacter maris).